Here is a 397-residue protein sequence, read N- to C-terminus: Ubiquitin-like modifier-activating enzyme 5 (397 aa).

Positions 76, 97, 120, 143, and 177 each coordinate ATP. Residues Cys219 and Cys222 each contribute to the Zn(2+) site. Cys243 acts as the Glycyl thioester intermediate in catalysis. Residues Cys296 and Cys301 each contribute to the Zn(2+) site. The UFM1-interacting sequence (UIS) signature appears at Ile327–Val339. Positions Ser340–Lys370 are linker. Positions Glu382–Leu397 match the UFC1-binding sequence (UFC) motif.

The protein belongs to the ubiquitin-activating E1 family. UBA5 subfamily. In terms of assembly, homodimer; homodimerization is required for UFM1 activation. Interacts (via UIS motif) with UFM1; binds UFM1 via a trans-binding mechanism in which UFM1 interacts with distinct sites in both subunits of the UBA5 homodimer. Interacts (via C-terminus) with UFC1.

The protein resides in the cytoplasm. It is found in the nucleus. Its subcellular location is the endoplasmic reticulum membrane. It localises to the golgi apparatus. In terms of biological role, E1-like enzyme which specifically catalyzes the first step in ufmylation. Activates UFM1 by first adenylating its C-terminal glycine residue with ATP, and thereafter linking this residue to the side chain of a cysteine residue in E1, yielding a UFM1-E1 thioester and free AMP. Activates UFM1 via a trans-binding mechanism, in which UFM1 interacts with distinct sites in both subunits of the UBA5 homodimer. Trans-binding also promotes stabilization of the UBA5 homodimer, and enhances ATP-binding. Transfer of UFM1 from UBA5 to the E2-like enzyme UFC1 also takes place using a trans mechanism. Ufmylation plays a key role in various processes, such as ribosome recycling, response to DNA damage, interferon response or reticulophagy (also called ER-phagy). The chain is Ubiquitin-like modifier-activating enzyme 5 from Gallus gallus (Chicken).